We begin with the raw amino-acid sequence, 195 residues long: Small ribosomal subunit protein bS16 (195 aa).

The span at 171–181 (PEAPVAAAEPA) shows a compositional bias: low complexity. Residues 171 to 195 (PEAPVAAAEPAPEVKAEEKEEGGEA) form a disordered region.

The protein belongs to the bacterial ribosomal protein bS16 family.

In Chlorobium luteolum (strain DSM 273 / BCRC 81028 / 2530) (Pelodictyon luteolum), this protein is Small ribosomal subunit protein bS16.